The chain runs to 422 residues: Ornithine decarboxylase (422 aa).

Position 71 is an N6-(pyridoxal phosphate)lysine (Lys71). Residues Ser203, Gly240, and 275–278 (EPGR) each bind pyridoxal 5'-phosphate. 331–332 (FD) is a substrate binding site. The active-site Proton donor; shared with dimeric partner is the Cys359. Asp360 serves as a coordination point for substrate. Residue Tyr388 participates in pyridoxal 5'-phosphate binding.

It belongs to the Orn/Lys/Arg decarboxylase class-II family. Homodimer. Only the dimer is catalytically active, as the active sites are constructed of residues from both monomers. Requires pyridoxal 5'-phosphate as cofactor.

The catalysed reaction is L-ornithine + H(+) = putrescine + CO2. It participates in amine and polyamine biosynthesis; putrescine biosynthesis via L-ornithine pathway; putrescine from L-ornithine: step 1/1. Its activity is regulated as follows. Inhibited by antizyme (AZ) in response to polyamine levels. AZ inhibits the assembly of the functional homodimer by binding to ODC monomers and targeting them for ubiquitin-independent proteolytic destruction by the 26S proteasome. Functionally, catalyzes the first and rate-limiting step of polyamine biosynthesis that converts ornithine into putrescine, which is the precursor for the polyamines, spermidine and spermine. Polyamines are essential for cell proliferation and are implicated in cellular processes, ranging from DNA replication to apoptosis. The polypeptide is Ornithine decarboxylase (Caenorhabditis elegans).